We begin with the raw amino-acid sequence, 319 residues long: L-lactate dehydrogenase (319 aa).

Residues 10–11, Asp32, Arg37, Tyr62, and 76–77 each bind NAD(+); these read RV and GV. Residues Gln79, Arg85, and 117–120 contribute to the substrate site; that span reads NPVD. NAD(+)-binding positions include 115 to 117 and Ser140; that span reads VTN. Substrate is bound at residue 145-148; that stretch reads DTAR. Arg150 and His165 together coordinate beta-D-fructose 1,6-bisphosphate. His172 acts as the Proton acceptor in catalysis. Position 217 is a phosphotyrosine (Tyr217). Thr226 provides a ligand contact to substrate.

Belongs to the LDH/MDH superfamily. LDH family. As to quaternary structure, homotetramer.

It is found in the cytoplasm. It catalyses the reaction (S)-lactate + NAD(+) = pyruvate + NADH + H(+). It functions in the pathway fermentation; pyruvate fermentation to lactate; (S)-lactate from pyruvate: step 1/1. Its activity is regulated as follows. Allosterically activated by fructose 1,6-bisphosphate (FBP). Inactivated by Mn(2+), Co(2+), Cd(2+) and Zn(2+). Functionally, catalyzes the conversion of lactate to pyruvate. It is stereospecific for L(+)-lactate. This Thermotoga maritima (strain ATCC 43589 / DSM 3109 / JCM 10099 / NBRC 100826 / MSB8) protein is L-lactate dehydrogenase.